Here is a 591-residue protein sequence, read N- to C-terminus: L-fucose isomerase (591 aa).

Catalysis depends on proton acceptor residues glutamate 337 and aspartate 361. Residues glutamate 337, aspartate 361, and histidine 528 each contribute to the Mn(2+) site.

The protein belongs to the L-fucose isomerase family. As to quaternary structure, homohexamer. The cofactor is Mn(2+).

The protein localises to the cytoplasm. The catalysed reaction is L-fucose = L-fuculose. It participates in carbohydrate degradation; L-fucose degradation; L-lactaldehyde and glycerone phosphate from L-fucose: step 1/3. Functionally, converts the aldose L-fucose into the corresponding ketose L-fuculose. In Salmonella schwarzengrund (strain CVM19633), this protein is L-fucose isomerase.